We begin with the raw amino-acid sequence, 389 residues long: Mitochondrial tRNA-specific 2-thiouridylase 1 (389 aa).

ATP contacts are provided by residues 8–15 (GVSGGVDS) and methionine 34. Residues 94-96 (NPD) are interaction with target base in tRNA. The active-site Nucleophile is the cysteine 99. Cysteines 99 and 205 form a disulfide. ATP is bound at residue glycine 124. The tract at residues 154 to 156 (KDQ) is interaction with tRNA. Cysteine 205 functions as the Cysteine persulfide intermediate in the catalytic mechanism. The interaction with tRNA stretch occupies residues 317-318 (QH).

The protein belongs to the MnmA/TRMU family.

The protein localises to the mitochondrion. The enzyme catalyses 5-taurinomethyluridine(34) in tRNA + S-sulfanyl-L-cysteinyl-[protein] + AH2 + ATP = 5-taurinomethyl-2-thiouridine(34) in tRNA + L-cysteinyl-[protein] + A + AMP + diphosphate + H(+). Its function is as follows. Catalyzes the 2-thiolation of uridine at the wobble position (U34) of mitochondrial tRNA(Lys), tRNA(Glu) and tRNA(Gln). Required for the formation of 5-taurinomethyl-2-thiouridine (tm5s2U) of mitochondrial tRNA(Lys), tRNA(Glu), and tRNA(Gln) at the wobble position. ATP is required to activate the C2 atom of the wobble base. The polypeptide is Mitochondrial tRNA-specific 2-thiouridylase 1 (Drosophila melanogaster (Fruit fly)).